We begin with the raw amino-acid sequence, 301 residues long: Multifunctional dioxygenase prhA (301 aa).

Fe cation contacts are provided by His130, Asp132, and His214.

The protein belongs to the PhyH family. As to quaternary structure, homodimer. The cofactor is Fe cation.

It catalyses the reaction preaustinoid A1 + 2-oxoglutarate + O2 = berkeleyone B + succinate + CO2 + H2O. The catalysed reaction is berkeleyone B + 2-oxoglutarate + O2 = berkeleydione + succinate + CO2 + H2O. The enzyme catalyses preaustinoid A + 2 2-oxoglutarate + 2 O2 = berkeleytrione + 2 succinate + 2 CO2 + H2O. It participates in secondary metabolite biosynthesis; terpenoid biosynthesis. Multifunctional dioxygenase; part of the gene cluster that mediates the biosynthesis of paraherquonin, a meroterpenoid with a unique, highly congested hexacyclic molecular architecture. The first step of the pathway is the synthesis of 3,5-dimethylorsellinic acid (DMOA) by the polyketide synthase prhL. Synthesis of DMOA is followed by farnesylation by the prenyltransferase prhE, methylesterification by the methyl-transferase prhM, epoxidation of the prenyl chain by the flavin-dependent monooxygenase prhF, and cyclization of the farnesyl moiety by the terpene cyclase prhH, to yield the tetracyclic intermediate, protoaustinoid A. The short chain dehydrogenase prhI then oxidizes the C-3 alcohol group of the terpene cyclase product to transform protoaustinoid A into protoaustinoid B. The FAD-binding monooxygenase prhJ catalyzes the oxidation of protoaustinoid B into preaustinoid A which is further oxidized into preaustinoid A1 by FAD-binding monooxygenase phrK. Finally, prhA leads to berkeleydione via the berkeleyone B intermediate. PrhA is a multifunctional dioxygenase that first desaturates at C5-C6 to form berkeleyone B, followed by rearrangement of the A/B-ring to form the cycloheptadiene moiety in berkeleydione. Berkeleydione serves as the key intermediate for the biosynthesis of paraherquonin as well as many other meroterpenoids. The cytochrome P450 monooxygenases prhB, prhD, and prhN, as well as the isomerase prhC, are probably involved in the late stage of paraherquonin biosynthesis, after the production of berkeleydione. Especially prhC might be a multifunctional enzyme that catalyzes the D-ring expansion via intramolecular methoxy rearrangement, as well as the hydrolysis of the expanded D-ring. In Penicillium brasilianum, this protein is Multifunctional dioxygenase prhA.